The sequence spans 890 residues: DNA mismatch repair protein MutS (890 aa).

Position 646–653 (646–653 (GPNMAGKS)) interacts with ATP.

It belongs to the DNA mismatch repair MutS family.

In terms of biological role, this protein is involved in the repair of mismatches in DNA. It is possible that it carries out the mismatch recognition step. This protein has a weak ATPase activity. The polypeptide is DNA mismatch repair protein MutS (Hyphomonas neptunium (strain ATCC 15444)).